A 142-amino-acid chain; its full sequence is Large ribosomal subunit protein uL11 (142 aa).

The protein belongs to the universal ribosomal protein uL11 family. As to quaternary structure, part of the ribosomal stalk of the 50S ribosomal subunit. Interacts with L10 and the large rRNA to form the base of the stalk. L10 forms an elongated spine to which L12 dimers bind in a sequential fashion forming a multimeric L10(L12)X complex. Post-translationally, one or more lysine residues are methylated.

Functionally, forms part of the ribosomal stalk which helps the ribosome interact with GTP-bound translation factors. This is Large ribosomal subunit protein uL11 from Pectobacterium carotovorum subsp. carotovorum (strain PC1).